The chain runs to 372 residues: Aminomethyltransferase (372 aa).

The protein belongs to the GcvT family. The glycine cleavage system is composed of four proteins: P, T, L and H.

It catalyses the reaction N(6)-[(R)-S(8)-aminomethyldihydrolipoyl]-L-lysyl-[protein] + (6S)-5,6,7,8-tetrahydrofolate = N(6)-[(R)-dihydrolipoyl]-L-lysyl-[protein] + (6R)-5,10-methylene-5,6,7,8-tetrahydrofolate + NH4(+). The glycine cleavage system catalyzes the degradation of glycine. In Prochlorococcus marinus (strain NATL2A), this protein is Aminomethyltransferase.